Consider the following 276-residue polypeptide: Protease HtpX homolog (276 aa).

The helical transmembrane segment at isoleucine 14–phenylalanine 34 threads the bilayer. Residue histidine 130 coordinates Zn(2+). Glutamate 131 is a catalytic residue. Position 134 (histidine 134) interacts with Zn(2+). The next 2 membrane-spanning stretches (helical) occupy residues valine 145–glycine 165 and leucine 171–isoleucine 191. Glutamate 196 contributes to the Zn(2+) binding site.

It belongs to the peptidase M48B family. The cofactor is Zn(2+).

The protein resides in the cell inner membrane. The protein is Protease HtpX homolog of Salinibacter ruber (strain DSM 13855 / M31).